An 834-amino-acid polypeptide reads, in one-letter code: U-box domain-containing protein 33 (834 aa).

The disordered stretch occupies residues 232 to 308 (FSTPESEHQH…SPSSFPDGVD (77 aa)). 2 stretches are compositionally biased toward polar residues: residues 243–273 (SRVQSTDSVQQLVSNGSSTEQSGRVSDGSLN) and 284–293 (SEVTGSATVM). Residues 334-462 (LRRQKAEKNA…SHAETSTLQL (129 aa)) are a coiled coil. The Protein kinase domain maps to 481–744 (FDSTLKIGEG…EVWRVLEPMR (264 aa)). ATP-binding positions include 487-495 (IGEGGYGSI) and K508. The Proton acceptor role is filled by D603. Residues 762–834 (IAPPYFICPI…AIQEWLQHHL (73 aa)) enclose the U-box domain.

The protein belongs to the protein kinase superfamily. Ser/Thr protein kinase family.

The catalysed reaction is L-seryl-[protein] + ATP = O-phospho-L-seryl-[protein] + ADP + H(+). It catalyses the reaction L-threonyl-[protein] + ATP = O-phospho-L-threonyl-[protein] + ADP + H(+). The enzyme catalyses S-ubiquitinyl-[E2 ubiquitin-conjugating enzyme]-L-cysteine + [acceptor protein]-L-lysine = [E2 ubiquitin-conjugating enzyme]-L-cysteine + N(6)-ubiquitinyl-[acceptor protein]-L-lysine.. Its pathway is protein modification; protein ubiquitination. Functions as an E3 ubiquitin ligase. The chain is U-box domain-containing protein 33 (PUB33) from Arabidopsis thaliana (Mouse-ear cress).